The primary structure comprises 110 residues: Nucleotide-binding protein in fmt 3'region (110 aa).

ATP is bound at residue 8–15 (GLSGAGKT). Residue 57-60 (DARA) coordinates GTP.

Belongs to the RapZ-like family.

In terms of biological role, displays ATPase and GTPase activities. The polypeptide is Nucleotide-binding protein in fmt 3'region (Thermus thermophilus).